The chain runs to 442 residues: Trigger factor (442 aa).

The PPIase FKBP-type domain maps to 176–259 (GDFISLSLYV…VNAVIEISSP (84 aa)).

This sequence belongs to the FKBP-type PPIase family. Tig subfamily.

Its subcellular location is the cytoplasm. It catalyses the reaction [protein]-peptidylproline (omega=180) = [protein]-peptidylproline (omega=0). In terms of biological role, involved in protein export. Acts as a chaperone by maintaining the newly synthesized protein in an open conformation. Functions as a peptidyl-prolyl cis-trans isomerase. This is Trigger factor from Chlamydia trachomatis serovar A (strain ATCC VR-571B / DSM 19440 / HAR-13).